A 138-amino-acid polypeptide reads, in one-letter code: Large ribosomal subunit protein bL19 (138 aa).

This sequence belongs to the bacterial ribosomal protein bL19 family.

In terms of biological role, this protein is located at the 30S-50S ribosomal subunit interface and may play a role in the structure and function of the aminoacyl-tRNA binding site. This chain is Large ribosomal subunit protein bL19, found in Rickettsia felis (strain ATCC VR-1525 / URRWXCal2) (Rickettsia azadi).